Consider the following 431-residue polypeptide: Divalent metal cation transporter MntH (431 aa).

11 helical membrane passes run 33-53 (LLKFLGPAFVVSVAYIDPGNF), 61-81 (SSFNYNLIWVILWSNLMAIFL), 110-130 (WIFWIVGELGAMATDLAEFIG), 141-161 (IPMIYAGLLTGVLTFIIVYME), 170-190 (TIIAALIAVICVAYTIELFLA), 211-231 (AVLIAVGMLGATVMPHVIYLH), 258-278 (ILIAMNIAFVVNAAMVIVSAA), 307-327 (GAFGIALLASGLSSSAVGTMA), 347-367 (IITMLPALIIIALGINPMRVL), 368-388 (VLSQVALSFILPFPIIQMLLI), and 406-426 (IVGFIIATMIILLNIILLYLT).

Belongs to the NRAMP family.

It is found in the cell membrane. In terms of biological role, h(+)-stimulated, divalent metal cation uptake system. The sequence is that of Divalent metal cation transporter MntH from Clostridium acetobutylicum (strain ATCC 824 / DSM 792 / JCM 1419 / IAM 19013 / LMG 5710 / NBRC 13948 / NRRL B-527 / VKM B-1787 / 2291 / W).